We begin with the raw amino-acid sequence, 373 residues long: tRNA-specific 2-thiouridylase MnmA (373 aa).

ATP-binding positions include 12 to 19 (GMSGGVDS) and methionine 38. The tract at residues 98-100 (NPD) is interaction with target base in tRNA. Cysteine 103 serves as the catalytic Nucleophile. Cysteine 103 and cysteine 200 are joined by a disulfide. Position 127 (glycine 127) interacts with ATP. The interaction with tRNA stretch occupies residues 150-152 (KDQ). Cysteine 200 acts as the Cysteine persulfide intermediate in catalysis. The segment at 312 to 313 (RY) is interaction with tRNA.

It belongs to the MnmA/TRMU family.

Its subcellular location is the cytoplasm. It carries out the reaction S-sulfanyl-L-cysteinyl-[protein] + uridine(34) in tRNA + AH2 + ATP = 2-thiouridine(34) in tRNA + L-cysteinyl-[protein] + A + AMP + diphosphate + H(+). Functionally, catalyzes the 2-thiolation of uridine at the wobble position (U34) of tRNA, leading to the formation of s(2)U34. The sequence is that of tRNA-specific 2-thiouridylase MnmA from Streptococcus agalactiae serotype Ia (strain ATCC 27591 / A909 / CDC SS700).